The chain runs to 258 residues: 2-succinyl-6-hydroxy-2,4-cyclohexadiene-1-carboxylate synthase (258 aa).

It belongs to the AB hydrolase superfamily. MenH family. As to quaternary structure, monomer.

The enzyme catalyses 5-enolpyruvoyl-6-hydroxy-2-succinyl-cyclohex-3-ene-1-carboxylate = (1R,6R)-6-hydroxy-2-succinyl-cyclohexa-2,4-diene-1-carboxylate + pyruvate. Its pathway is quinol/quinone metabolism; 1,4-dihydroxy-2-naphthoate biosynthesis; 1,4-dihydroxy-2-naphthoate from chorismate: step 3/7. It functions in the pathway quinol/quinone metabolism; menaquinone biosynthesis. Catalyzes a proton abstraction reaction that results in 2,5-elimination of pyruvate from 2-succinyl-5-enolpyruvyl-6-hydroxy-3-cyclohexene-1-carboxylate (SEPHCHC) and the formation of 2-succinyl-6-hydroxy-2,4-cyclohexadiene-1-carboxylate (SHCHC). This is 2-succinyl-6-hydroxy-2,4-cyclohexadiene-1-carboxylate synthase from Enterobacter sp. (strain 638).